The chain runs to 182 residues: ATP-dependent protease subunit HslV (182 aa).

The active site involves T6. Na(+) is bound by residues A164, C167, and T170.

Belongs to the peptidase T1B family. HslV subfamily. A double ring-shaped homohexamer of HslV is capped on each side by a ring-shaped HslU homohexamer. The assembly of the HslU/HslV complex is dependent on binding of ATP.

It is found in the cytoplasm. The enzyme catalyses ATP-dependent cleavage of peptide bonds with broad specificity.. Its activity is regulated as follows. Allosterically activated by HslU binding. Functionally, protease subunit of a proteasome-like degradation complex believed to be a general protein degrading machinery. In Borreliella burgdorferi (strain ATCC 35210 / DSM 4680 / CIP 102532 / B31) (Borrelia burgdorferi), this protein is ATP-dependent protease subunit HslV.